The following is a 559-amino-acid chain: Estrogen receptor beta (559 aa).

Residues 1–155 form a modulating region; that stretch reads MAVACSPEKD…SSGGKADLHF (155 aa). The disordered stretch occupies residues 128-148; the sequence is TSSKSARRRSQENEEGEVSSG. 2 NR C4-type zinc fingers span residues 156 to 176 and 192 to 216; these read CAVC…CEGC and CPAT…LHKC. The nuclear receptor DNA-binding region spans 156-221; sequence CAVCHDYASG…RLHKCYNVGM (66 aa). The span at 243-254 shows a compositional bias: polar residues; sequence RLSSQGRTSGPS. The disordered stretch occupies residues 243-269; sequence RLSSQGRTSGPSVLNGPAVGPLNTPQP. The 237-residue stretch at 273–509 folds into the NR LBD domain; it reads TSKQLIERIM…DLLLEMLDAH (237 aa). The interval 514–559 is disordered; sequence SRLPRRSPQQETVEQCDAPARPHSPGTSGPTNTWTPSCTGGRGEPQ. Residues 538-551 are compositionally biased toward polar residues; sequence PGTSGPTNTWTPSC.

Belongs to the nuclear hormone receptor family. NR3 subfamily. In terms of assembly, binds DNA as a homodimer. Can form a heterodimer with ER-alpha.

The protein resides in the nucleus. Functionally, binds estrogens with an affinity similar to that of ER-alpha, and activates expression of reporter genes containing estrogen response elements (ERE) in an estrogen-dependent manner. This is Estrogen receptor beta (esr2) from Sparus aurata (Gilthead sea bream).